The sequence spans 146 residues: Antiholin-like protein LrgA (146 aa).

4 helical membrane passes run 7 to 29, 34 to 53, 65 to 87, and 97 to 119; these read YGFL…IAAI, IPAS…LKVI, LTSL…LGVM, and VILL…ILSL.

This sequence belongs to the CidA/LrgA family. LrgA subfamily.

The protein localises to the cell membrane. In terms of biological role, inhibits the expression or activity of extracellular murein hydrolases by interacting, possibly with LrgB, with the holin-like protein CidA. The LrgAB and CidA proteins may affect the proton motive force of the membrane. May be involved in programmed cell death (PCD), possibly triggering PCD in response to antibiotics and environmental stresses. This Bacillus subtilis (strain 168) protein is Antiholin-like protein LrgA.